Here is a 196-residue protein sequence, read N- to C-terminus: Large ribosomal subunit protein bL17 (196 aa).

Residues 133–196 (AAKRDADKKE…KPAAEEKDAK (64 aa)) are disordered. Over residues 134 to 143 (AKRDADKKEA) the composition is skewed to basic and acidic residues. A compositionally biased stretch (acidic residues) spans 152–164 (EVAETEAAPEAEA). Residues 184-196 (AAEKPAAEEKDAK) show a composition bias toward basic and acidic residues.

Belongs to the bacterial ribosomal protein bL17 family. In terms of assembly, part of the 50S ribosomal subunit. Contacts protein L32.

In Arthrobacter sp. (strain FB24), this protein is Large ribosomal subunit protein bL17.